We begin with the raw amino-acid sequence, 72 residues long: Translation initiation factor IF-1 (72 aa).

Positions 1–72 (MAKDDVIEVD…DKGRITFRYK (72 aa)) constitute an S1-like domain.

This sequence belongs to the IF-1 family. In terms of assembly, component of the 30S ribosomal translation pre-initiation complex which assembles on the 30S ribosome in the order IF-2 and IF-3, IF-1 and N-formylmethionyl-tRNA(fMet); mRNA recruitment can occur at any time during PIC assembly.

The protein localises to the cytoplasm. Its function is as follows. One of the essential components for the initiation of protein synthesis. Stabilizes the binding of IF-2 and IF-3 on the 30S subunit to which N-formylmethionyl-tRNA(fMet) subsequently binds. Helps modulate mRNA selection, yielding the 30S pre-initiation complex (PIC). Upon addition of the 50S ribosomal subunit IF-1, IF-2 and IF-3 are released leaving the mature 70S translation initiation complex. In Wolinella succinogenes (strain ATCC 29543 / DSM 1740 / CCUG 13145 / JCM 31913 / LMG 7466 / NCTC 11488 / FDC 602W) (Vibrio succinogenes), this protein is Translation initiation factor IF-1.